The primary structure comprises 215 residues: DNA repair and recombination protein RadB (215 aa).

Belongs to the eukaryotic RecA-like protein family. RadB subfamily.

Its function is as follows. Involved in DNA repair and in homologous recombination. May regulate the cleavage reactions of the branch-structured DNA. Has a very weak ATPase activity that is not stimulated by DNA. Binds DNA but does not promote DNA strands exchange. The polypeptide is DNA repair and recombination protein RadB (Methanococcus maripaludis (strain C7 / ATCC BAA-1331)).